Consider the following 466-residue polypeptide: Ribulose bisphosphate carboxylase large chain (466 aa).

Residue Lys5 is modified to N6,N6,N6-trimethyllysine. Substrate is bound by residues Asn114 and Thr164. Residue Lys166 is the Proton acceptor of the active site. Lys168 lines the substrate pocket. The Mg(2+) site is built by Lys192, Asp194, and Glu195. An N6-carboxylysine modification is found at Lys192. Residue His285 is the Proton acceptor of the active site. 3 residues coordinate substrate: Arg286, His318, and Ser370.

Belongs to the RuBisCO large chain family. Type I subfamily. Heterohexadecamer of 8 large chains and 8 small chains; disulfide-linked. The disulfide link is formed within the large subunit homodimers. The cofactor is Mg(2+). In terms of processing, the disulfide bond which can form in the large chain dimeric partners within the hexadecamer appears to be associated with oxidative stress and protein turnover.

The protein resides in the plastid. The protein localises to the chloroplast. It carries out the reaction 2 (2R)-3-phosphoglycerate + 2 H(+) = D-ribulose 1,5-bisphosphate + CO2 + H2O. The catalysed reaction is D-ribulose 1,5-bisphosphate + O2 = 2-phosphoglycolate + (2R)-3-phosphoglycerate + 2 H(+). Its function is as follows. RuBisCO catalyzes two reactions: the carboxylation of D-ribulose 1,5-bisphosphate, the primary event in carbon dioxide fixation, as well as the oxidative fragmentation of the pentose substrate in the photorespiration process. Both reactions occur simultaneously and in competition at the same active site. The polypeptide is Ribulose bisphosphate carboxylase large chain (Cercidiphyllum japonicum (Katsura tree)).